We begin with the raw amino-acid sequence, 162 residues long: D-aminoacyl-tRNA deacylase (162 aa).

Residues 143-144 (GP) carry the Gly-cisPro motif, important for rejection of L-amino acids motif.

It belongs to the DTD family. In terms of assembly, homodimer.

The protein localises to the cytoplasm. It catalyses the reaction glycyl-tRNA(Ala) + H2O = tRNA(Ala) + glycine + H(+). The enzyme catalyses a D-aminoacyl-tRNA + H2O = a tRNA + a D-alpha-amino acid + H(+). An aminoacyl-tRNA editing enzyme that deacylates mischarged D-aminoacyl-tRNAs. Also deacylates mischarged glycyl-tRNA(Ala), protecting cells against glycine mischarging by AlaRS. Acts via tRNA-based rather than protein-based catalysis; rejects L-amino acids rather than detecting D-amino acids in the active site. By recycling D-aminoacyl-tRNA to D-amino acids and free tRNA molecules, this enzyme counteracts the toxicity associated with the formation of D-aminoacyl-tRNA entities in vivo and helps enforce protein L-homochirality. The sequence is that of D-aminoacyl-tRNA deacylase from Nitratidesulfovibrio vulgaris (strain ATCC 29579 / DSM 644 / CCUG 34227 / NCIMB 8303 / VKM B-1760 / Hildenborough) (Desulfovibrio vulgaris).